A 559-amino-acid chain; its full sequence is Potassium-transporting ATPase potassium-binding subunit (559 aa).

Transmembrane regions (helical) follow at residues 5 to 25, 63 to 83, 131 to 151, 173 to 193, 254 to 274, 282 to 302, 327 to 347, 356 to 376, 379 to 399, 416 to 436, 483 to 503, and 525 to 545; these read GFLLLASYLLVLLVLARPLGT, LLAILLFNALGGLALFALLML, VGLTVQNFLSAATGIAVVFAL, ITLWLLLPLSLLVALFFIQQG, VQMLAIFLIPAALCFAFGEVV, AILWAMTLIFILCVAVVMWAE, FGILASSLFAVITTAASCGAV, ALGGMVPMWLMQIGEVVFGGV, GLYGMLLFVMLAVFIAGLMVG, MIALAILVTPTLVLLGTALAM, LLLAFCMLVGRFAVIIPVMAI, and ALFIGLLIGTVLLVGALTFIP.

It belongs to the KdpA family. In terms of assembly, the system is composed of three essential subunits: KdpA, KdpB and KdpC.

Its subcellular location is the cell inner membrane. Functionally, part of the high-affinity ATP-driven potassium transport (or Kdp) system, which catalyzes the hydrolysis of ATP coupled with the electrogenic transport of potassium into the cytoplasm. This subunit binds the periplasmic potassium ions and delivers the ions to the membrane domain of KdpB through an intramembrane tunnel. The polypeptide is Potassium-transporting ATPase potassium-binding subunit (Klebsiella pneumoniae (strain 342)).